A 525-amino-acid chain; its full sequence is Cytochrome P450 monooxygenase tpcC (525 aa).

The helical transmembrane segment at Leu-13–Val-33 threads the bilayer. Cys-457 contributes to the heme binding site.

This sequence belongs to the cytochrome P450 family. Heme serves as cofactor.

It is found in the membrane. Its pathway is secondary metabolite biosynthesis; terpenoid biosynthesis. In terms of biological role, cytochrome P450 monooxygenase; part of the gene cluster that mediates the biosynthesis of terpestacin. The bifunctional terpene synthase tpcA converts isopentenyl diphosphate (IPP) and dimethylallyl diphosphate (DMAPP) into the sesterterpene preterpestacin I. The C-terminal prenyltransferase (PT) domain of tpcA catalyzes formation of GFPP, whereas the N-terminal terpene cyclase (TC) domain catalyzes the cyclization of GFPP into preterpestacin I. The cytochrome P450 monooxygenase tpcB then hydroxylates preterpestacin I to yield 24-hydroxypreterpstacin I (renamed as preterpestacin II) whereas the cytochrome P450 monooxygenase tpcC further hydroxylates preterpestacin II to yield 16,17-dihydroxypreterpestacin II (renamed as preterpestacin III). Finally, the FAD-dependent monooxygenase tpcD converts preterpestacin III into terpestacin. The polypeptide is Cytochrome P450 monooxygenase tpcC (Cochliobolus heterostrophus (strain C5 / ATCC 48332 / race O) (Southern corn leaf blight fungus)).